A 573-amino-acid chain; its full sequence is Urease subunit alpha (573 aa).

The Urease domain occupies 136 to 573; that stretch reads GAIDCHVHLI…LPMAQRYFLF (438 aa). His-141, His-143, and Lys-224 together coordinate Ni(2+). Lys-224 is modified (N6-carboxylysine). Substrate is bound at residue His-226. Ni(2+) is bound by residues His-253 and His-279. His-327 functions as the Proton donor in the catalytic mechanism. Asp-367 contributes to the Ni(2+) binding site.

This sequence belongs to the metallo-dependent hydrolases superfamily. Urease alpha subunit family. In terms of assembly, heterotrimer of UreA (gamma), UreB (beta) and UreC (alpha) subunits. Three heterotrimers associate to form the active enzyme. Requires Ni cation as cofactor. In terms of processing, carboxylation allows a single lysine to coordinate two nickel ions.

It is found in the cytoplasm. The catalysed reaction is urea + 2 H2O + H(+) = hydrogencarbonate + 2 NH4(+). Its pathway is nitrogen metabolism; urea degradation; CO(2) and NH(3) from urea (urease route): step 1/1. This chain is Urease subunit alpha, found in Mycolicibacterium vanbaalenii (strain DSM 7251 / JCM 13017 / BCRC 16820 / KCTC 9966 / NRRL B-24157 / PYR-1) (Mycobacterium vanbaalenii).